The following is a 569-amino-acid chain: Endonuclease/exonuclease/phosphatase family domain-containing protein 1 (569 aa).

Residue G2 is the site of N-myristoyl glycine attachment. Phosphoserine is present on residues S16 and S25. The HhH domain occupies 38 to 67 (ERLNINTATEEELMTLPGVTRAVARSIVEY). A phosphoserine mark is found at S106, S110, S160, and S173. The interval 200-224 (SRPPSTHTNGGLTFTAKPHPSPTSL) is disordered. The segment covering 202–211 (PPSTHTNGGL) has biased composition (polar residues). The residue at position 265 (T265) is a Phosphothreonine. The tract at residues 549 to 569 (VPRNGNGVTLEPSEANIKHER) is disordered.

The protein is Endonuclease/exonuclease/phosphatase family domain-containing protein 1 (Eepd1) of Mus musculus (Mouse).